Here is a 360-residue protein sequence, read N- to C-terminus: Phospho-N-acetylmuramoyl-pentapeptide-transferase (360 aa).

The next 10 membrane-spanning stretches (helical) occupy residues 26 to 46 (TILGVLTALGIALLVGPAVIQ), 70 to 90 (GTPTMGGALILVAIAVATLLW), 97 to 117 (YVWVVLLTTLAFGVIGGVDDY), 132 to 152 (AKFFWQTVVALMAAVFLFSTA), 168 to 188 (VVLPLGLLFIPLVWLVVVGSS), 199 to 219 (GLAILPSVLVAGGLAVFAYAT), 236 to 256 (AGEVVVFCGALIGAGLGFLWF), 263 to 283 (VFMGDVGALALGAALGILAVV), 288 to 308 (LVLLIMGGVFVVETLSVMLQV), and 338 to 358 (VIVRFWIITVVLVLVGLAMLK).

Belongs to the glycosyltransferase 4 family. MraY subfamily. It depends on Mg(2+) as a cofactor.

The protein resides in the cell inner membrane. The enzyme catalyses UDP-N-acetyl-alpha-D-muramoyl-L-alanyl-gamma-D-glutamyl-meso-2,6-diaminopimeloyl-D-alanyl-D-alanine + di-trans,octa-cis-undecaprenyl phosphate = di-trans,octa-cis-undecaprenyl diphospho-N-acetyl-alpha-D-muramoyl-L-alanyl-D-glutamyl-meso-2,6-diaminopimeloyl-D-alanyl-D-alanine + UMP. The protein operates within cell wall biogenesis; peptidoglycan biosynthesis. Catalyzes the initial step of the lipid cycle reactions in the biosynthesis of the cell wall peptidoglycan: transfers peptidoglycan precursor phospho-MurNAc-pentapeptide from UDP-MurNAc-pentapeptide onto the lipid carrier undecaprenyl phosphate, yielding undecaprenyl-pyrophosphoryl-MurNAc-pentapeptide, known as lipid I. The sequence is that of Phospho-N-acetylmuramoyl-pentapeptide-transferase from Alkalilimnicola ehrlichii (strain ATCC BAA-1101 / DSM 17681 / MLHE-1).